We begin with the raw amino-acid sequence, 357 residues long: Putative F-box protein At5g50220 (357 aa).

The region spanning 27-73 (IAEDIGIPIDLMVEILKKLPAKSLIKFQCVSKQWSSIIGSSRDFIDS) is the F-box domain.

This is Putative F-box protein At5g50220 from Arabidopsis thaliana (Mouse-ear cress).